Consider the following 495-residue polypeptide: Bifunctional protein GlmU (495 aa).

The tract at residues 1-241 (MTFPGDTAVL…SALVAGVNNR (241 aa)) is pyrophosphorylase. UDP-N-acetyl-alpha-D-glucosamine-binding positions include 12-15 (LAAG), K26, Q83, 88-89 (GT), 112-114 (SGD), G151, E166, N181, and N239. D114 contributes to the Mg(2+) binding site. N239 contacts Mg(2+). The linker stretch occupies residues 242–262 (VQLAELASELNRRVVAAHQLA). Positions 263-495 (GVTVVDPATT…TQPPDADQTP (233 aa)) are N-acetyltransferase. UDP-N-acetyl-alpha-D-glucosamine-binding residues include R344 and K362. The active-site Proton acceptor is the H374. Residues Y377 and N388 each contribute to the UDP-N-acetyl-alpha-D-glucosamine site. Acetyl-CoA contacts are provided by residues A391, 397–398 (NY), S416, and A434. The disordered stretch occupies residues 457–495 (IENWVQRKRPGSPAAQASKRASEMACQQPTQPPDADQTP). The span at 483-495 (QQPTQPPDADQTP) shows a compositional bias: low complexity.

In the N-terminal section; belongs to the N-acetylglucosamine-1-phosphate uridyltransferase family. This sequence in the C-terminal section; belongs to the transferase hexapeptide repeat family. As to quaternary structure, homotrimer. The cofactor is Mg(2+).

Its subcellular location is the cytoplasm. It catalyses the reaction alpha-D-glucosamine 1-phosphate + acetyl-CoA = N-acetyl-alpha-D-glucosamine 1-phosphate + CoA + H(+). The catalysed reaction is N-acetyl-alpha-D-glucosamine 1-phosphate + UTP + H(+) = UDP-N-acetyl-alpha-D-glucosamine + diphosphate. It functions in the pathway nucleotide-sugar biosynthesis; UDP-N-acetyl-alpha-D-glucosamine biosynthesis; N-acetyl-alpha-D-glucosamine 1-phosphate from alpha-D-glucosamine 6-phosphate (route II): step 2/2. Its pathway is nucleotide-sugar biosynthesis; UDP-N-acetyl-alpha-D-glucosamine biosynthesis; UDP-N-acetyl-alpha-D-glucosamine from N-acetyl-alpha-D-glucosamine 1-phosphate: step 1/1. The protein operates within bacterial outer membrane biogenesis; LPS lipid A biosynthesis. In terms of biological role, catalyzes the last two sequential reactions in the de novo biosynthetic pathway for UDP-N-acetylglucosamine (UDP-GlcNAc). The C-terminal domain catalyzes the transfer of acetyl group from acetyl coenzyme A to glucosamine-1-phosphate (GlcN-1-P) to produce N-acetylglucosamine-1-phosphate (GlcNAc-1-P), which is converted into UDP-GlcNAc by the transfer of uridine 5-monophosphate (from uridine 5-triphosphate), a reaction catalyzed by the N-terminal domain. The protein is Bifunctional protein GlmU of Mycobacterium tuberculosis (strain ATCC 25177 / H37Ra).